Reading from the N-terminus, the 106-residue chain is NADH dehydrogenase [ubiquinone] 1 alpha subcomplex subunit 8-B (106 aa).

S2 carries the N-acetylserine modification. 2 consecutive CHCH domains span residues 26–67 (GMRC…LKDL) and 68–106 (HQKCQKEMDDYVGCMYYYTNEFDLCRKEQEAFEKVCPLK). Short sequence motifs (cx9C motif) lie at residues 29 to 39 (CMPENVAFLKC), 49 to 59 (CLDKGRDVTRC), and 71 to 81 (CQKEMDDYVGC). 4 disulfide bridges follow: C29-C59, C39-C49, C71-C103, and C81-C92. The Cx10C motif motif lies at 92 to 103 (CRKEQEAFEKVC).

It belongs to the complex I NDUFA8 subunit family. Complex I is composed of at least 49 different subunits.

The protein resides in the mitochondrion. It localises to the mitochondrion intermembrane space. Functionally, accessory subunit of the mitochondrial membrane respiratory chain NADH dehydrogenase (Complex I), that is believed not to be involved in catalysis. Complex I functions in the transfer of electrons from NADH to the respiratory chain. The immediate electron acceptor for the enzyme is believed to be ubiquinone. The protein is NADH dehydrogenase [ubiquinone] 1 alpha subcomplex subunit 8-B of Arabidopsis thaliana (Mouse-ear cress).